The sequence spans 477 residues: Glycogen synthase (477 aa).

K15 contributes to the ADP-alpha-D-glucose binding site.

It belongs to the glycosyltransferase 1 family. Bacterial/plant glycogen synthase subfamily.

The catalysed reaction is [(1-&gt;4)-alpha-D-glucosyl](n) + ADP-alpha-D-glucose = [(1-&gt;4)-alpha-D-glucosyl](n+1) + ADP + H(+). The protein operates within glycan biosynthesis; glycogen biosynthesis. Synthesizes alpha-1,4-glucan chains using ADP-glucose. The chain is Glycogen synthase from Erwinia tasmaniensis (strain DSM 17950 / CFBP 7177 / CIP 109463 / NCPPB 4357 / Et1/99).